The following is a 177-amino-acid chain: Large ribosomal subunit protein uL6 (177 aa).

This sequence belongs to the universal ribosomal protein uL6 family. As to quaternary structure, part of the 50S ribosomal subunit.

This protein binds to the 23S rRNA, and is important in its secondary structure. It is located near the subunit interface in the base of the L7/L12 stalk, and near the tRNA binding site of the peptidyltransferase center. The chain is Large ribosomal subunit protein uL6 from Rickettsia massiliae (strain Mtu5).